Reading from the N-terminus, the 313-residue chain is Formimidoylglutamase (313 aa).

Mn(2+) is bound by residues histidine 130, aspartate 155, histidine 157, aspartate 159, aspartate 241, and aspartate 243.

This sequence belongs to the arginase family. Mn(2+) is required as a cofactor.

It carries out the reaction N-formimidoyl-L-glutamate + H2O = formamide + L-glutamate. Its pathway is amino-acid degradation; L-histidine degradation into L-glutamate; L-glutamate from N-formimidoyl-L-glutamate (hydrolase route): step 1/1. Functionally, catalyzes the conversion of N-formimidoyl-L-glutamate to L-glutamate and formamide. In Citrobacter koseri (strain ATCC BAA-895 / CDC 4225-83 / SGSC4696), this protein is Formimidoylglutamase.